Reading from the N-terminus, the 166-residue chain is Protein-export protein SecB (166 aa).

It belongs to the SecB family. Homotetramer, a dimer of dimers. One homotetramer interacts with 1 SecA dimer.

It localises to the cytoplasm. In terms of biological role, one of the proteins required for the normal export of preproteins out of the cell cytoplasm. It is a molecular chaperone that binds to a subset of precursor proteins, maintaining them in a translocation-competent state. It also specifically binds to its receptor SecA. The polypeptide is Protein-export protein SecB (Rhizorhabdus wittichii (strain DSM 6014 / CCUG 31198 / JCM 15750 / NBRC 105917 / EY 4224 / RW1) (Sphingomonas wittichii)).